We begin with the raw amino-acid sequence, 108 residues long: ATP synthase peripheral stalk subunit F6, mitochondrial (108 aa).

Residues 1 to 32 (MTVQRIFRLSSVLRSAVSVHLRRNIGVTAVAF) constitute a mitochondrion transit peptide. Residues K41, K46, and K79 each carry the N6-acetyllysine modification. Residues K84 and K99 each carry the N6-acetyllysine; alternate modification. N6-succinyllysine; alternate occurs at positions 84 and 99. The residue at position 105 (K105) is an N6-acetyllysine. Position 108 is a phosphoserine (S108).

Belongs to the eukaryotic ATPase subunit F6 family. As to quaternary structure, component of the ATP synthase complex composed at least of ATP5F1A/subunit alpha, ATP5F1B/subunit beta, ATP5MC1/subunit c (homooctomer), MT-ATP6/subunit a, MT-ATP8/subunit 8, ATP5ME/subunit e, ATP5MF/subunit f, ATP5MG/subunit g, ATP5MK/subunit k, ATP5MJ/subunit j, ATP5F1C/subunit gamma, ATP5F1D/subunit delta, ATP5F1E/subunit epsilon, ATP5PF/subunit F6, ATP5PB/subunit b, ATP5PD/subunit d, ATP5PO/subunit OSCP. ATP synthase complex consists of a soluble F(1) head domain (subunits alpha(3) and beta(3)) - the catalytic core - and a membrane F(0) domain - the membrane proton channel (subunits c, a, 8, e, f, g, k and j). These two domains are linked by a central stalk (subunits gamma, delta, and epsilon) rotating inside the F1 region and a stationary peripheral stalk (subunits F6, b, d, and OSCP).

The protein localises to the mitochondrion. It localises to the mitochondrion inner membrane. Subunit F6, of the mitochondrial membrane ATP synthase complex (F(1)F(0) ATP synthase or Complex V) that produces ATP from ADP in the presence of a proton gradient across the membrane which is generated by electron transport complexes of the respiratory chain. ATP synthase complex consist of a soluble F(1) head domain - the catalytic core - and a membrane F(1) domain - the membrane proton channel. These two domains are linked by a central stalk rotating inside the F(1) region and a stationary peripheral stalk. During catalysis, ATP synthesis in the catalytic domain of F(1) is coupled via a rotary mechanism of the central stalk subunits to proton translocation. In vivo, can only synthesize ATP although its ATP hydrolase activity can be activated artificially in vitro. Part of the complex F(0) domain. Part of the complex F(0) domain and the peripheric stalk, which acts as a stator to hold the catalytic alpha(3)beta(3) subcomplex and subunit a/ATP6 static relative to the rotary elements. The polypeptide is ATP synthase peripheral stalk subunit F6, mitochondrial (Rattus norvegicus (Rat)).